Consider the following 418-residue polypeptide: Cobalt-zinc-cadmium resistance protein CzcC (418 aa).

Residues 1–22 (MRRLFLPLGLAVAFLSPNFAVA) form the signal peptide.

Belongs to the outer membrane factor (OMF) (TC 1.B.17) family.

The protein localises to the cell outer membrane. In terms of biological role, czcC protein appears to modify the specificity of the system, perhaps by acting on the CzcB protein. When the CzcC protein is added to CzcA and CzcB, the efflux system gains specificity for cadmium and cobalt. The sequence is that of Cobalt-zinc-cadmium resistance protein CzcC (czcC) from Cupriavidus metallidurans (strain ATCC 43123 / DSM 2839 / NBRC 102507 / CH34) (Ralstonia metallidurans).